Here is a 767-residue protein sequence, read N- to C-terminus: ATPase family gene 2 protein homolog B (767 aa).

The residue at position 1 (Met1) is an N-acetylmethionine. ATP contacts are provided by residues Gly241–Thr248 and Gly507–Thr514.

The protein belongs to the AAA ATPase family. AFG2 subfamily. Part of the 55LCC heterohexameric ATPase complex composed at least of AIRIM, AFG2A, AFG2B and CINP. Associates with pre-60S ribosomal particles.

It is found in the cytoplasm. The protein localises to the cytoskeleton. The protein resides in the spindle. It localises to the nucleus. It carries out the reaction ATP + H2O = ADP + phosphate + H(+). In the context of 55LCC heterohexameric ATPase complex, the ATPase activity is stimulated by DNA binding and inhibited in presence of RNA. Functionally, ATP-dependent chaperone part of the 55LCC heterohexameric ATPase complex which is chromatin-associated and promotes replisome proteostasis to maintain replication fork progression and genome stability. Required for replication fork progression, sister chromatid cohesion, and chromosome stability. The ATPase activity is specifically enhanced by replication fork DNA and is coupled to cysteine protease-dependent cleavage of replisome substrates in response to replication fork damage. Uses ATPase activity to process replisome substrates in S-phase, facilitating their proteolytic turnover from chromatin to ensure DNA replication and mitotic fidelity. Plays an essential role in the cytoplasmic maturation steps of pre-60S ribosomal particles by promoting the release of shuttling protein RSL24D1/RLP24 from the pre-ribosomal particles. The protein is ATPase family gene 2 protein homolog B (AFG2B) of Bos taurus (Bovine).